Consider the following 261-residue polypeptide: Class II histocompatibility antigen, M alpha chain (261 aa).

An N-terminal signal peptide occupies residues 1–26 (MEHEQKSGAVLLRLLRLLWLLPHSWA). Positions 27-124 (VLEASTPVLW…KLEGQIPVSR (98 aa)) are alpha-1. Over 27-231 (VLEASTPVLW…ALPSDLLENA (205 aa)) the chain is Lumenal. An N-linked (GlcNAc...) asparagine glycan is attached at Asn-41. 2 disulfides stabilise this stretch: Cys-50-Cys-105 and Cys-147-Cys-202. One can recognise an Ig-like C1-type domain in the interval 114–215 (PKLEGQIPVS…HEIDRYTAIA (102 aa)). The segment at 125–217 (GLSVAEVFTL…IDRYTAIAYW (93 aa)) is alpha-2. Residues 218-231 (VPQNALPSDLLENA) form a connecting peptide region. Residues 232-252 (LCGVAFALGVLGTIIGIVFFL) form a helical membrane-spanning segment. The Cytoplasmic portion of the chain corresponds to 253 to 261 (CSQRPCSGD).

This sequence belongs to the MHC class II family. Heterodimer of an alpha chain (DMA) and a beta chain (DMB). Interacts with MHCII; this interaction mediates rapid selection of high-affinity peptides.

Its subcellular location is the late endosome membrane. The protein localises to the lysosome membrane. Functionally, plays a critical role in catalyzing the release of class II-associated invariant chain peptide (CLIP) from newly synthesized MHC class II molecules and freeing the peptide binding site for acquisition of antigenic peptides. This is Class II histocompatibility antigen, M alpha chain (H2-DMa) from Mus musculus (Mouse).